The following is a 721-amino-acid chain: Mitogen-activated protein kinase 6 (721 aa).

Met1 is covalently cross-linked (Peptide (Met-Gly) (interchain with G-Cter in ubiquitin)). One can recognise a Protein kinase domain in the interval 20-316; sequence YMDLKPLGCG…AEEALSHPYM (297 aa). Residues 26–34 and Lys49 contribute to the ATP site; that span reads LGCGGNGLV. Asp152 functions as the Proton acceptor in the catalytic mechanism. Ser189 bears the Phosphoserine; by PAK1, PAK2 and PAK3 mark. An SEG motif motif is present at residues 189 to 191; the sequence is SEG. Positions 332-337 match the FRIEDE motif motif; the sequence is FHIEDE. Phosphoserine occurs at positions 386, 452, 556, 558, 665, and 684. The segment covering 701–715 has biased composition (polar residues); that stretch reads AMKSSPQIPHQTYSS. The interval 701–721 is disordered; the sequence is AMKSSPQIPHQTYSSILKHLN.

This sequence belongs to the protein kinase superfamily. CMGC Ser/Thr protein kinase family. MAP kinase subfamily. Heterodimer with ERK4/MAPK4. Interacts with (via FRIEDE motif) MAPKAPK5. Interacts with UBE3A; this interaction may be indirect and mediated by HERC2, possibly via HERC2 interaction with NEURL4. The cofactor is Mg(2+). Phosphorylated at Ser-189 by PAK1, PAK2 and PAK3 resulting in catalytic activation. Phosphorylated by MAPKAPK5 at other sites. In terms of processing, ubiquitination at Met-1 leads to degradation by the proteasome pathway. As to expression, highest expression in the skeletal muscle, followed by the brain. Also found in heart, placenta, lung, liver, pancreas, kidney and skin fibroblasts.

It is found in the cytoplasm. Its subcellular location is the nucleus. The catalysed reaction is L-seryl-[protein] + ATP = O-phospho-L-seryl-[protein] + ADP + H(+). It catalyses the reaction L-threonyl-[protein] + ATP = O-phospho-L-threonyl-[protein] + ADP + H(+). Activated by phosphorylation at Ser-189. In terms of biological role, atypical MAPK protein. Phosphorylates microtubule-associated protein 2 (MAP2) and MAPKAPK5. The precise role of the complex formed with MAPKAPK5 is still unclear, but the complex follows a complex set of phosphorylation events: upon interaction with atypical MAPKAPK5, ERK3/MAPK6 is phosphorylated at Ser-189 and then mediates phosphorylation and activation of MAPKAPK5, which in turn phosphorylates ERK3/MAPK6. May promote entry in the cell cycle. This Homo sapiens (Human) protein is Mitogen-activated protein kinase 6 (MAPK6).